A 200-amino-acid chain; its full sequence is UPF0637 protein LCK_01372 (200 aa).

It belongs to the UPF0637 family.

In Leuconostoc citreum (strain KM20), this protein is UPF0637 protein LCK_01372.